We begin with the raw amino-acid sequence, 443 residues long: ATP-dependent protease ATPase subunit HslU (443 aa).

ATP is bound by residues isoleucine 18, 60 to 65 (GVGKTE), aspartate 256, glutamate 321, and arginine 393.

This sequence belongs to the ClpX chaperone family. HslU subfamily. As to quaternary structure, a double ring-shaped homohexamer of HslV is capped on each side by a ring-shaped HslU homohexamer. The assembly of the HslU/HslV complex is dependent on binding of ATP.

It localises to the cytoplasm. ATPase subunit of a proteasome-like degradation complex; this subunit has chaperone activity. The binding of ATP and its subsequent hydrolysis by HslU are essential for unfolding of protein substrates subsequently hydrolyzed by HslV. HslU recognizes the N-terminal part of its protein substrates and unfolds these before they are guided to HslV for hydrolysis. This Citrobacter koseri (strain ATCC BAA-895 / CDC 4225-83 / SGSC4696) protein is ATP-dependent protease ATPase subunit HslU.